The primary structure comprises 172 residues: Small ribosomal subunit protein uS5 (172 aa).

The S5 DRBM domain maps to 17-80; sequence LREKMIAVNR…EEARRNMVKV (64 aa).

This sequence belongs to the universal ribosomal protein uS5 family. Part of the 30S ribosomal subunit. Contacts proteins S4 and S8.

With S4 and S12 plays an important role in translational accuracy. Functionally, located at the back of the 30S subunit body where it stabilizes the conformation of the head with respect to the body. The protein is Small ribosomal subunit protein uS5 of Verminephrobacter eiseniae (strain EF01-2).